A 330-amino-acid chain; its full sequence is Inactive hydroxysteroid dehydrogenase-like protein 1 (330 aa).

Alanine 2 bears the N-acetylalanine mark. The required for mitochondria translocation stretch occupies residues 2-82 (AAVDSFYLLY…SGATDGIGKA (81 aa)). NADP(+) is bound by residues 74 to 80 (GATDGIG), aspartate 125, and lysine 222.

This sequence belongs to the short-chain dehydrogenases/reductases (SDR) family. 17-beta-HSD 3 subfamily. As to quaternary structure, interacts with STYXL1. As to expression, highly expressed in testis and ovary. Also detected in thyroid, spinal cord, adrenal gland, heart, placenta, skeletal muscle, small intestine, colon, spleen, prostate and pancreas.

The protein resides in the mitochondrion. The sequence is that of Inactive hydroxysteroid dehydrogenase-like protein 1 (HSDL1) from Homo sapiens (Human).